The primary structure comprises 174 residues: Dual-action ribosomal maturation protein DarP (174 aa).

Belongs to the DarP family.

It localises to the cytoplasm. In terms of biological role, member of a network of 50S ribosomal subunit biogenesis factors which assembles along the 30S-50S interface, preventing incorrect 23S rRNA structures from forming. Promotes peptidyl transferase center (PTC) maturation. The chain is Dual-action ribosomal maturation protein DarP from Vibrio campbellii (strain ATCC BAA-1116).